Consider the following 360-residue polypeptide: Protein MGF 360-1L (360 aa).

Belongs to the asfivirus MGF 360 family.

Plays a role in virus cell tropism, and may be required for efficient virus replication in macrophages. In Ornithodoros (relapsing fever ticks), this protein is Protein MGF 360-1L.